Reading from the N-terminus, the 508-residue chain is 2,3-bisphosphoglycerate-independent phosphoglycerate mutase (508 aa).

2 residues coordinate Mn(2+): aspartate 14 and serine 64. Serine 64 acts as the Phosphoserine intermediate in catalysis. Substrate contacts are provided by residues histidine 125, 155–156, arginine 187, arginine 193, 259–262, and lysine 332; these read RD and RADR. Mn(2+) is bound by residues aspartate 399, histidine 403, aspartate 440, histidine 441, and histidine 459.

It belongs to the BPG-independent phosphoglycerate mutase family. As to quaternary structure, monomer. Mn(2+) is required as a cofactor.

It catalyses the reaction (2R)-2-phosphoglycerate = (2R)-3-phosphoglycerate. Its pathway is carbohydrate degradation; glycolysis; pyruvate from D-glyceraldehyde 3-phosphate: step 3/5. Functionally, catalyzes the interconversion of 2-phosphoglycerate and 3-phosphoglycerate. The protein is 2,3-bisphosphoglycerate-independent phosphoglycerate mutase of Pseudomonas fluorescens (strain Pf0-1).